A 359-amino-acid polypeptide reads, in one-letter code: DNA-directed RNA polymerase RPB3-11 homolog (359 aa).

In the N-terminal section; belongs to the archaeal RpoD/eukaryotic RPB3 RNA polymerase subunit family. This sequence in the C-terminal section; belongs to the archaeal RpoL/eukaryotic RPB11/RPC19 RNA polymerase subunit family. Part of the viral DNA-directed RNA polymerase that consists of 8 polII-like subunits (RPB1, RPB2, RPB3, RPB5, RPB6, RPB7, RPB9, RPB10), a capping enzyme and a termination factor.

It is found in the host cytoplasm. It localises to the virion. Functionally, component of the DNA-directed RNA polymerase (RNAP) that catalyzes the transcription in the cytoplasm of viral DNA into RNA using the four ribonucleoside triphosphates as substrates. In Ornithodoros (relapsing fever ticks), this protein is DNA-directed RNA polymerase RPB3-11 homolog.